The sequence spans 217 residues: Rhicadhesin receptor (217 aa).

Positions 1 to 20 (MKLIAVLLLVVLATATTATA) are cleaved as a signal peptide. The cysteines at positions 30 and 45 are disulfide-linked. N-linked (GlcNAc...) asparagine glycans are attached at residues Asn-50 and Asn-68. Positions 58-207 (SNLLVKQGAT…AFQIGTKEVQ (150 aa)) constitute a Cupin type-1 domain. Mn(2+) contacts are provided by His-107, His-109, Glu-114, and His-153.

Belongs to the germin family. Glycosylated.

The protein localises to the secreted. Its subcellular location is the extracellular space. The protein resides in the apoplast. It is found in the cell wall. Functionally, putative receptor for bacterial rhicadhesin, an attachment protein of rhizobiaceae. This Pisum sativum (Garden pea) protein is Rhicadhesin receptor (GER1).